The primary structure comprises 258 residues: Thiazole synthase (258 aa).

K98 serves as the catalytic Schiff-base intermediate with DXP. Residues G159, 185-186 (AG), and 207-208 (NT) contribute to the 1-deoxy-D-xylulose 5-phosphate site.

This sequence belongs to the ThiG family. As to quaternary structure, homotetramer. Forms heterodimers with either ThiH or ThiS.

The protein localises to the cytoplasm. The enzyme catalyses [ThiS sulfur-carrier protein]-C-terminal-Gly-aminoethanethioate + 2-iminoacetate + 1-deoxy-D-xylulose 5-phosphate = [ThiS sulfur-carrier protein]-C-terminal Gly-Gly + 2-[(2R,5Z)-2-carboxy-4-methylthiazol-5(2H)-ylidene]ethyl phosphate + 2 H2O + H(+). The protein operates within cofactor biosynthesis; thiamine diphosphate biosynthesis. Catalyzes the rearrangement of 1-deoxy-D-xylulose 5-phosphate (DXP) to produce the thiazole phosphate moiety of thiamine. Sulfur is provided by the thiocarboxylate moiety of the carrier protein ThiS. In vitro, sulfur can be provided by H(2)S. The chain is Thiazole synthase from Cytophaga hutchinsonii (strain ATCC 33406 / DSM 1761 / CIP 103989 / NBRC 15051 / NCIMB 9469 / D465).